A 501-amino-acid polypeptide reads, in one-letter code: MSILLYFFFLPVILSLIFMKKFKDSKRNLPPSPPKLPIIGNLHQLRGLFHRCLHDLSKKHGPVLLLRLGFIDMVVISSKEAAEEVLKVHDLECCTRPKTNASSKFSRDGKDIAFAPYGEVSRELRKLSLINFFSTQKVRSFRYIREEENDLMVKKLKESAKKKNTVDLSQTLFYLVGSIIFRATFGQRLDQNKHVNKEKIEELMFEVQKVGSLSSSDIFPAGVGWFMDFVSGRHKTLHKVFVEVDTLLNHVIDGHLKNPEDKTNQDRPDIIDSILETIYKQEQDESFKLTIDHLKGIIQNIYLAGVDTSAITMIWAMAELVKNPRVMKKAQEEIRTCIGIKQKERIEEEDVDKLQYLKLVIKETLRLHPPAPLLLPRETMADIKIQGYDIPRKTILLVNAWSIGRNPELWENPEEFNPERFIDCPMDYKGNSFEMLPFGSGRKICPGIAFGIATVELGLLNLLYYFDWRLAEEDKDIDMEEAGDATIVKKVPLELVPIIHH.

Residues Ser-2 to Phe-22 traverse the membrane as a helical segment. Cys-445 contributes to the heme binding site.

It belongs to the cytochrome P450 family. Heme is required as a cofactor.

The protein resides in the membrane. The polypeptide is Cytochrome P450 71B3 (CYP71B3) (Arabidopsis thaliana (Mouse-ear cress)).